Reading from the N-terminus, the 364-residue chain is DNA replication and repair protein RecF (364 aa).

30–37 (GKNAQGKT) lines the ATP pocket.

This sequence belongs to the RecF family.

Its subcellular location is the cytoplasm. The RecF protein is involved in DNA metabolism; it is required for DNA replication and normal SOS inducibility. RecF binds preferentially to single-stranded, linear DNA. It also seems to bind ATP. The protein is DNA replication and repair protein RecF of Geotalea uraniireducens (strain Rf4) (Geobacter uraniireducens).